Here is a 369-residue protein sequence, read N- to C-terminus: MEILMTVSKLASICTMGANASALEKEIGPEQFPVNEHYFGLVNFGNTCYCNSVLQALYFCRPFREKVLAYKSQPRKKESLLTCLADLFHSIATQKKKVGVIPPKKFITRLRKENELFDNYMQQDAHEFLNYLLNTIADILQEERKQEKQNGRLPNGNIDSENNSTPDPTWVHEIFQGTLTNETRCLTCETISSKDEDFLDLSVDVEQNTSITHCLRGFSNTETLCSEYKYYCEECRSKQEAHKRMKVKKLPMILALHLKRFKYMDQLHRYTKLSYRVVFPLELRLFNTSGDATNPDRMYDLVAVVVHCGSGPNRGHYIAIVKSHDFWLLFDDDIVEKIDAQAIEEFYGLTSDISKNSESGYILFYQSRD.

Residues M1–L4 carry the Required for plasma membrane localization of USP12/WDR20 motif. Residues F39–R368 form the USP domain. The active-site Nucleophile is C48. The interval K145 to T165 is disordered. The Zn(2+) site is built by C185, C188, C232, and C235. H316 (proton acceptor) is an active-site residue.

The protein belongs to the peptidase C19 family. USP12/USP46 subfamily. Interacts with WDR48. Interacts with WDR20; this interaction promotes translocation of the USP12 complex to the plasma membrane. Component of the USP12/WDR20/WDR48 deubiquitinating complex. Component of the USP12/WDR20/WDR48 deubiquitinating complex. Interacts with PHLPP1. Interacts with RBPJ. Interacts with CBP; this interaction blocks the acetyltransferase activity of CREBBP.

The protein localises to the nucleus. Its subcellular location is the cytoplasm. The protein resides in the cell membrane. It carries out the reaction Thiol-dependent hydrolysis of ester, thioester, amide, peptide and isopeptide bonds formed by the C-terminal Gly of ubiquitin (a 76-residue protein attached to proteins as an intracellular targeting signal).. Activated by interaction with WDR20, WDR48 and DMWD through different allosteric mechanisms. Its function is as follows. Deubiquitinating enzyme that plays various roles in the regulation of the immune response and inflammation. During TCR engagement and activation, translocates into the cytoplasm and deubiquitinates its substrates LAT and TRAT1 and prevents their lysosome-dependent degradation to stabilize the TCR signaling complex at the plasma membrane. Plays an essential role in the selective LPS-induced macrophage response through the activation of NF-kappa-B pathway. In addition, promotes that antiviral immune response through targeting DNA sensor IFI16 to inhibit its proteasome-dependent degradation. Participates in the interferon signaling pathway and antiviral response independently of its deubiquitinase activity by maintaining nuclear phosphorylated STAT1 levels via inhibition of its CREBBP-mediated acetylation and subsequent dephosphorylation. Plays an intrinsic role in promoting the differentiation, activation and proliferation of CD4(+) T-cell by activating the NF-kappa-B signaling pathway through deubiquitinating and stabilizing B-cell lymphoma/leukemia 10/BCL10. In myeloid-derived suppressor cells promotes the activation of the NF-kappa-B via deubiquitination and stabilization of RELA. Regulates the 'Lys-63'-linked polyubiquitin chains of BAX and thereby modulates the mitochondrial apoptotic process. Negative regulator of NOTCH signaling that specifically deubiquitinates non-activated NOTCH receptors to target them for lysosomal degradation; deubiquitination of NOTCH stimulates its transport form late endosomes to lysosomes. Protects neurons against HTT/huntingtin-induced polyglutamine expansion-dependent neurodegeneration through regulation of autophagic flux. This function is independent of deubiquitinase activity or of other components of the USP12-WDR20-WDR48 deubiquitinating complex. In complex with WDR48, acts as a potential tumor suppressor by positively regulating PHLPP1 stability. This Bos taurus (Bovine) protein is Ubiquitin carboxyl-terminal hydrolase 12 (USP12).